A 676-amino-acid polypeptide reads, in one-letter code: Maternal embryonic leucine zipper kinase (676 aa).

Positions 13 to 265 (YEVYETIGSG…VKHLLDHPWV (253 aa)) constitute a Protein kinase domain. Residues 19–27 (IGSGGFAKV) and Lys-42 each bind ATP. Asp-134 (proton acceptor) is an active-site residue. Phosphothreonine; by autocatalysis is present on Thr-169. Phosphoserine; by autocatalysis is present on Ser-173. The interval 284 to 323 (IDEDCITEMAVTFKQSKQRTIQLVSEWKYDQITATYLLLL) is UBA-like. Residues 328 to 673 (QGRPVRLRAE…VEDILSSSSQ (346 aa)) form an autoinhibitory region region. Residues 423–443 (EHSRPCRQKPERRERTKENKE) show a composition bias toward basic and acidic residues. Residues 423 to 518 (EHSRPCRQKP…QQNGQQGELN (96 aa)) are disordered. Residues 462-489 (TPTSSRKVKSNRTVMTTPNHNNNKSSEV) show a composition bias toward polar residues. Low complexity predominate over residues 508–518 (QQQNGQQGELN). Residues 624–673 (SDFGKVTMQFELEVCLLQKPEVVGIRRQRLKGDAWVYKHLVEDILSSSSQ) form the KA1 domain.

This sequence belongs to the protein kinase superfamily. CAMK Ser/Thr protein kinase family. SNF1 subfamily. In terms of processing, autophosphorylated: autophosphorylation of the T-loop at Thr-169 and Ser-173 is required for activation. Strongly expressed in the eye, gill, kidney, spleen, muscle, ovary and testis and weakly in the heart, liver, and gut. Expressed in the brain and lateral mesoderm at 12 hours post-fertilization (hpf).

The protein localises to the cell membrane. It catalyses the reaction L-seryl-[protein] + ATP = O-phospho-L-seryl-[protein] + ADP + H(+). The catalysed reaction is L-threonyl-[protein] + ATP = O-phospho-L-threonyl-[protein] + ADP + H(+). Activated by autophosphorylation of the T-loop at Thr-169 and Ser-173: in contrast to other members of the SNF1 subfamily, phosphorylation at Thr-169 is not mediated by STK11/LKB1 but via autophosphorylation instead. Functionally, serine/threonine-protein kinase involved in various processes such as cell cycle regulation, self-renewal of stem cells, apoptosis and splicing regulation. Also plays a role in primitive hematopoiesis, possibly by affecting the expression of genes critical for hematopoiesis. The protein is Maternal embryonic leucine zipper kinase (melk) of Danio rerio (Zebrafish).